The primary structure comprises 132 residues: MGSIGEPNRLLCWSIYVTKKPDQSEEDHHNHVSKVNAPMMIPFLKKYGIVRYTVKHNDAHSKPKQAALMAGQPEENVLAYDTVFEMIVKDIESIQTMQKDEEFLRTTIPDHFNFADMTRSKGSLTWIEEFTF.

The EthD domain maps to 21–117 (PDQSEEDHHN…IPDHFNFADM (97 aa)).

It belongs to the tpcK family.

It participates in mycotoxin biosynthesis. In terms of biological role, dehydratase; part of the gene cluster that mediates the biosynthesis of cercosporin, a light-activated, non-host-selective toxin. The perylenequinone chromophore of cercosporin absorbs light energy to attain an electronically-activated triplet state and produces active oxygen species such as the hydroxyl radical, superoxide, hydrogen peroxide or singlet oxygen upon reaction with oxygen molecules. These reactive oxygen species cause damage to various cellular components including lipids, proteins and nucleic acids. The first step of cercosporin biosynthesis is performed by the polyketide synthase CTB1 which catalyzes the formation of nor-toralactone. The starter unit acyltransferase (SAT) domain of CTB1 initiates polyketide extension by the selective utilization of acetyl-CoA, which is elongated to the heptaketide in the beta-ketoacyl synthase (KS) domain by successive condensations with six malonyl units introduced by the malonyl acyltransferase (MAT) domain. The product template (PT) domain catalyzes C4-C9 and C2-C11 aldol cyclizations and dehydrations to a trihydroxynaphthalene, which is thought to be delivered to the thioesterase (TE) domain for product release. The bifunctional enzyme CTB3 then methylates nor-toralactone to toralactone before conducting an unusual oxidative aromatic ring opening. The O-methyltransferase CTB2 further methylates the nascent OH-6 of the CBT3 product, blocking further oxidation at this site before the reductase CTB6 reduces the 2-oxopropyl ketone at position C7, giving naphthalene. The FAD-dependent monooxygenase CTB5 in concert with the multicopper oxidase CTB12 are responsible for homodimerization of naphthalene with CTB7 installing the dioxepine moiety, finally producing cercosporin. The fasciclin domain-containing protein CTB11 might act with CTB5 and CTB12 whereas the roles of CTB9 and CTB10 have still to be elucidated. This Cercospora beticola (Sugarbeet leaf spot fungus) protein is Dehydratase CTB10.